Reading from the N-terminus, the 300-residue chain is Protein orai (300 aa).

Residues 1–128 (MPRSHDPSRV…SKAQLKASSR (128 aa)) lie on the Cytoplasmic side of the membrane. The disordered stretch occupies residues 58 to 82 (QPPSSGGGSRNVGGGDGAAGNSKNG). The span at 62–75 (SGGGSRNVGGGDGA) shows a compositional bias: gly residues. A helical transmembrane segment spans residues 129 to 146 (TSALLAGFAMVCLVELQY). Over 147–153 (DDSTSKP) the chain is Extracellular. Residues 154–174 (LLIVLGVVTSLLVSVHLLALM) form a helical membrane-spanning segment. At 175-205 (MSTCILPYMEATGCTQDSPHLKLKFYIDLSW) the chain is on the cytoplasmic side. The chain crosses the membrane as a helical span at residues 206 to 226 (LFSTCIGLLLFLVEIGVIFYV). At 227–237 (KFTAVGYPTAG) the chain is on the extracellular side. A helical transmembrane segment spans residues 238–258 (YITTAMLIPVGIVFVLFSYLI). Residues 259–300 (HKNRVSHSLGRFKDKVDTMKQFLDVEANLQKSTIAPSTIRDI) are Cytoplasmic-facing.

It belongs to the Orai family.

The protein resides in the membrane. Its function is as follows. Ca(2+) release-activated Ca(2+)-like (CRAC-like) channel subunit which mediates Ca(2+) influx and increase in Ca(2+)-selective current by synergy with the Ca(2+) sensor, stim-1. Required for Ca(2+) and IP3-dependent contractile activity of sheath cells and the spermatheca. Affects brood size and somatic cell function. The chain is Protein orai (orai-1) from Caenorhabditis briggsae.